Here is a 75-residue protein sequence, read N- to C-terminus: Exodeoxyribonuclease 7 small subunit (75 aa).

It belongs to the XseB family. Heterooligomer composed of large and small subunits.

It is found in the cytoplasm. It catalyses the reaction Exonucleolytic cleavage in either 5'- to 3'- or 3'- to 5'-direction to yield nucleoside 5'-phosphates.. Bidirectionally degrades single-stranded DNA into large acid-insoluble oligonucleotides, which are then degraded further into small acid-soluble oligonucleotides. The sequence is that of Exodeoxyribonuclease 7 small subunit from Listeria innocua serovar 6a (strain ATCC BAA-680 / CLIP 11262).